The sequence spans 89 residues: Large ribosomal subunit protein uL29 (89 aa).

Belongs to the universal ribosomal protein uL29 family.

The polypeptide is Large ribosomal subunit protein uL29 (Frankia alni (strain DSM 45986 / CECT 9034 / ACN14a)).